The sequence spans 481 residues: Rho GTPase-activating protein 15 (481 aa).

Residues S51, S111, S204, S207, and S249 each carry the phosphoserine modification. The 111-residue stretch at 87–197 folds into the PH domain; sequence MVEKEGYLQK…WFQAIKNAID (111 aa). In terms of domain architecture, Rho-GAP spans 287 to 476; that stretch reads SHLHTVCERE…FMLTEYDKIF (190 aa).

The protein localises to the cytoplasm. It localises to the membrane. Functionally, GTPase activator for the Rho-type GTPases by converting them to an inactive GDP-bound state. Has activity toward RAC1. Overexpression results in an increase in actin stress fibers and cell contraction. This is Rho GTPase-activating protein 15 (Arhgap15) from Mus musculus (Mouse).